Reading from the N-terminus, the 183-residue chain is ATP synthase subunit delta (183 aa).

It belongs to the ATPase delta chain family. In terms of assembly, F-type ATPases have 2 components, F(1) - the catalytic core - and F(0) - the membrane proton channel. F(1) has five subunits: alpha(3), beta(3), gamma(1), delta(1), epsilon(1). F(0) has three main subunits: a(1), b(2) and c(10-14). The alpha and beta chains form an alternating ring which encloses part of the gamma chain. F(1) is attached to F(0) by a central stalk formed by the gamma and epsilon chains, while a peripheral stalk is formed by the delta and b chains.

It localises to the cell inner membrane. In terms of biological role, f(1)F(0) ATP synthase produces ATP from ADP in the presence of a proton or sodium gradient. F-type ATPases consist of two structural domains, F(1) containing the extramembraneous catalytic core and F(0) containing the membrane proton channel, linked together by a central stalk and a peripheral stalk. During catalysis, ATP synthesis in the catalytic domain of F(1) is coupled via a rotary mechanism of the central stalk subunits to proton translocation. Functionally, this protein is part of the stalk that links CF(0) to CF(1). It either transmits conformational changes from CF(0) to CF(1) or is implicated in proton conduction. The protein is ATP synthase subunit delta of Ruthia magnifica subsp. Calyptogena magnifica.